The chain runs to 321 residues: Lipoyl synthase (321 aa).

[4Fe-4S] cluster is bound by residues cysteine 68, cysteine 73, cysteine 79, cysteine 94, cysteine 98, cysteine 101, and serine 308. The 218-residue stretch at 80–297 (FNHGTATFMI…KEIALELGFT (218 aa)) folds into the Radical SAM core domain.

Belongs to the radical SAM superfamily. Lipoyl synthase family. Requires [4Fe-4S] cluster as cofactor.

The protein resides in the cytoplasm. The enzyme catalyses [[Fe-S] cluster scaffold protein carrying a second [4Fe-4S](2+) cluster] + N(6)-octanoyl-L-lysyl-[protein] + 2 oxidized [2Fe-2S]-[ferredoxin] + 2 S-adenosyl-L-methionine + 4 H(+) = [[Fe-S] cluster scaffold protein] + N(6)-[(R)-dihydrolipoyl]-L-lysyl-[protein] + 4 Fe(3+) + 2 hydrogen sulfide + 2 5'-deoxyadenosine + 2 L-methionine + 2 reduced [2Fe-2S]-[ferredoxin]. It participates in protein modification; protein lipoylation via endogenous pathway; protein N(6)-(lipoyl)lysine from octanoyl-[acyl-carrier-protein]: step 2/2. Catalyzes the radical-mediated insertion of two sulfur atoms into the C-6 and C-8 positions of the octanoyl moiety bound to the lipoyl domains of lipoate-dependent enzymes, thereby converting the octanoylated domains into lipoylated derivatives. In Aliivibrio fischeri (strain MJ11) (Vibrio fischeri), this protein is Lipoyl synthase.